The chain runs to 343 residues: Putative dihydroflavonol 4-reductase (343 aa).

NADP(+) is bound at residue Y150.

The protein belongs to the NAD(P)-dependent epimerase/dehydratase family. Dihydroflavonol-4-reductase subfamily.

The catalysed reaction is a (2R,3S,4S)-leucoanthocyanidin + NADP(+) = a (2R,3R)-dihydroflavonol + NADPH + H(+). It participates in secondary metabolite biosynthesis; flavonoid biosynthesis. The chain is Putative dihydroflavonol 4-reductase (dfrA) from Synechocystis sp. (strain ATCC 27184 / PCC 6803 / Kazusa).